Reading from the N-terminus, the 217-residue chain is Non-structural protein NS3 (217 aa).

This sequence belongs to the orbivirus NS3 family.

In terms of biological role, may play a role in the release of virions from infected cells. The polypeptide is Non-structural protein NS3 (Segment-10) (Camelus dromedarius (Dromedary)).